An 81-amino-acid chain; its full sequence is Defensin-like protein 266 (81 aa).

The first 26 residues, 1-26 (MEKIVFRKIVFVAFLLSLSCLLEGEA), serve as a signal peptide directing secretion. Cystine bridges form between C40–C58, C46–C63, and C50–C65.

This sequence belongs to the DEFL family.

Its subcellular location is the secreted. The protein is Defensin-like protein 266 of Arabidopsis thaliana (Mouse-ear cress).